A 412-amino-acid chain; its full sequence is Transcription termination factor 3, mitochondrial (412 aa).

The N-terminal 67 residues, 1-67, are a transit peptide targeting the mitochondrion; the sequence is MALLAQQLPR…IKTYRTLFWN (67 aa).

This sequence belongs to the mTERF family.

It localises to the mitochondrion. Its function is as follows. Binds promoter DNA and regulates initiation of transcription. Required for normal mitochondrial transcription and translation, and for normal assembly of mitochondrial respiratory complexes. Required for normal mitochondrial function. Maintains 16S rRNA levels and functions in mitochondrial ribosome assembly by regulating the biogenesis of the 39S ribosomal subunit. This chain is Transcription termination factor 3, mitochondrial (Mterf3), found in Mus musculus (Mouse).